We begin with the raw amino-acid sequence, 201 residues long: ATP-dependent Clp protease proteolytic subunit 2 (201 aa).

Serine 100 acts as the Nucleophile in catalysis. Histidine 125 is an active-site residue.

It belongs to the peptidase S14 family. In terms of assembly, fourteen ClpP subunits assemble into 2 heptameric rings which stack back to back to give a disk-like structure with a central cavity, resembling the structure of eukaryotic proteasomes.

The protein resides in the cytoplasm. The catalysed reaction is Hydrolysis of proteins to small peptides in the presence of ATP and magnesium. alpha-casein is the usual test substrate. In the absence of ATP, only oligopeptides shorter than five residues are hydrolyzed (such as succinyl-Leu-Tyr-|-NHMec, and Leu-Tyr-Leu-|-Tyr-Trp, in which cleavage of the -Tyr-|-Leu- and -Tyr-|-Trp bonds also occurs).. Functionally, cleaves peptides in various proteins in a process that requires ATP hydrolysis. Has a chymotrypsin-like activity. Plays a major role in the degradation of misfolded proteins. This chain is ATP-dependent Clp protease proteolytic subunit 2, found in Corynebacterium glutamicum (strain ATCC 13032 / DSM 20300 / JCM 1318 / BCRC 11384 / CCUG 27702 / LMG 3730 / NBRC 12168 / NCIMB 10025 / NRRL B-2784 / 534).